A 245-amino-acid polypeptide reads, in one-letter code: Eukaryotic translation initiation factor 6 (245 aa).

2 positions are modified to phosphoserine; by CK1: S174 and S175. Residue S231 is modified to Phosphoserine.

Belongs to the eIF-6 family. In terms of assembly, monomer. Associates with the 60S ribosomal subunit. Phosphorylation at Ser-174 and Ser-175 promotes nuclear export.

Its subcellular location is the cytoplasm. The protein resides in the nucleus. It localises to the nucleolus. In terms of biological role, binds to the 60S ribosomal subunit and prevents its association with the 40S ribosomal subunit to form the 80S initiation complex in the cytoplasm. Is also involved in ribosome biogenesis. Associates with pre-60S subunits in the nucleus and is involved in its nuclear export. Cytoplasmic release of TIF6 from 60S subunits and nuclear relocalization is promoted by the GTPase RIA1/EFL1 and by SDO1. Also required for pre-rRNA processing. This chain is Eukaryotic translation initiation factor 6, found in Saccharomyces cerevisiae (strain ATCC 204508 / S288c) (Baker's yeast).